Reading from the N-terminus, the 361-residue chain is Peptide chain release factor 1 (361 aa).

Gln235 bears the N5-methylglutamine mark.

It belongs to the prokaryotic/mitochondrial release factor family. Methylated by PrmC. Methylation increases the termination efficiency of RF1.

It is found in the cytoplasm. Functionally, peptide chain release factor 1 directs the termination of translation in response to the peptide chain termination codons UAG and UAA. This Chlamydia felis (strain Fe/C-56) (Chlamydophila felis) protein is Peptide chain release factor 1.